Consider the following 152-residue polypeptide: Transcriptional regulator MraZ (152 aa).

2 consecutive SpoVT-AbrB domains span residues 5 to 52 (ATLV…PLPE) and 81 to 124 (ASEC…DETT).

It belongs to the MraZ family. As to quaternary structure, forms oligomers.

The protein localises to the cytoplasm. The protein resides in the nucleoid. Functionally, negatively regulates its own expression and that of the subsequent genes in the proximal part of the division and cell wall (dcw) gene cluster. Acts by binding directly to DNA. May also regulate the expression of genes outside the dcw cluster. The polypeptide is Transcriptional regulator MraZ (Shigella sonnei (strain Ss046)).